The chain runs to 201 residues: Recombination protein RecR (201 aa).

The segment at 60–75 (CHACGNVDTSDPCTIC) adopts a C4-type zinc-finger fold. Residues 83–178 (TTLVVVEDVS…TITRLAHGVP (96 aa)) enclose the Toprim domain.

Belongs to the RecR family.

Its function is as follows. May play a role in DNA repair. It seems to be involved in an RecBC-independent recombinational process of DNA repair. It may act with RecF and RecO. The protein is Recombination protein RecR of Methylorubrum populi (strain ATCC BAA-705 / NCIMB 13946 / BJ001) (Methylobacterium populi).